Here is a 1468-residue protein sequence, read N- to C-terminus: Potassium channel K2 (1468 aa).

6 consecutive transmembrane segments (helical) span residues 48–68, 146–165, 185–209, 221–240, 246–264, and 285–306; these read MIYIGIGILLKIILIIIYWIY, FNCYFCNTRDILYAIIWYIS, IYIYNILLILLSSSYIDLVMIIISY, LLIDVFFSSPSAFFFSRHFF, IDIYFLMGFLRIIKVFLNV, and IILGVLLLCNAFASTLYTIQGI. An intramembrane region (pore-forming) is located at residues 326-344; that stretch reads YFYFSIISISTVGYGDIIP. The chain crosses the membrane as a helical span at residues 351-368; sequence VICIFFIFWTFIWVPIQF. Residues 804 to 823 are disordered; sequence TCARTNESHKNNRLRSRRSQ. Residues 814-823 are compositionally biased toward basic residues; sequence NNRLRSRRSQ. Residues 1141–1185 adopt a coiled-coil conformation; it reads KSNKNSNNNNKCEQIKQLNNNLTFKKNEKKTKSNKQNTNDTLERR.

The protein localises to the membrane. Its function is as follows. May be involved in transmembrane potassium transport at the subcellular level not affecting bulk potassium transport across the plasma membrane. This is Potassium channel K2 from Plasmodium berghei (strain Anka).